A 287-amino-acid polypeptide reads, in one-letter code: Undecaprenyl-diphosphatase (287 aa).

7 consecutive transmembrane segments (helical) span residues 6–26, 45–65, 85–105, 111–131, 204–224, 238–258, and 265–285; these read LYLIKAFFLGIIEGLTEFIPV, SGKVFEVVIQFGSILAVMWIF, AFTRNLLLAFLPAAVVGAIFI, VFYHPGVVAVTLVLGGLIMLW, ATEFSFFLAMPTMLGAATYDL, AIAVGFAAAFISALVVVRAVL, and TYRGFAWYRIALGIVVAAWLM.

The protein belongs to the UppP family.

It localises to the cell inner membrane. It catalyses the reaction di-trans,octa-cis-undecaprenyl diphosphate + H2O = di-trans,octa-cis-undecaprenyl phosphate + phosphate + H(+). Its function is as follows. Catalyzes the dephosphorylation of undecaprenyl diphosphate (UPP). Confers resistance to bacitracin. In Bordetella petrii (strain ATCC BAA-461 / DSM 12804 / CCUG 43448), this protein is Undecaprenyl-diphosphatase.